The chain runs to 689 residues: DNA ligase (689 aa).

Residues 58 to 62, 107 to 108, and glutamate 138 contribute to the NAD(+) site; these read DQEYD and SL. Lysine 140 functions as the N6-AMP-lysine intermediate in the catalytic mechanism. Positions 161, 198, 314, and 338 each coordinate NAD(+). Cysteine 432, cysteine 435, cysteine 448, and cysteine 453 together coordinate Zn(2+). The 79-residue stretch at 611–689 folds into the BRCT domain; it reads ASSGTLSGKT…QELLEMLHGG (79 aa).

It belongs to the NAD-dependent DNA ligase family. LigA subfamily. Mg(2+) is required as a cofactor. The cofactor is Mn(2+).

The enzyme catalyses NAD(+) + (deoxyribonucleotide)n-3'-hydroxyl + 5'-phospho-(deoxyribonucleotide)m = (deoxyribonucleotide)n+m + AMP + beta-nicotinamide D-nucleotide.. Functionally, DNA ligase that catalyzes the formation of phosphodiester linkages between 5'-phosphoryl and 3'-hydroxyl groups in double-stranded DNA using NAD as a coenzyme and as the energy source for the reaction. It is essential for DNA replication and repair of damaged DNA. The sequence is that of DNA ligase from Methylacidiphilum infernorum (isolate V4) (Methylokorus infernorum (strain V4)).